Here is a 232-residue protein sequence, read N- to C-terminus: Triggering receptor expressed on myeloid cells 1 (232 aa).

The first 20 residues, 1–20, serve as a signal peptide directing secretion; it reads MRKAGVWGLLWMLFIEEIQA. In terms of domain architecture, Ig-like V-type spans 21–125; it reads AAEVFEEKCT…DPIILFHPVR (105 aa). Topologically, residues 21-203 are extracellular; sequence AAEVFEEKCT…THVNRAPGIS (183 aa). A disulfide bridge links cysteine 41 with cysteine 109. A disordered region spans residues 152–186; it reads PLPVTTKLRPRPRPRPKPVTQPIPTSADRLSSPGF. Residue asparagine 192 is glycosylated (N-linked (GlcNAc...) asparagine). A helical transmembrane segment spans residues 204–224; that stretch reads IIIPAACGLLSKTLVFIGLFA. Residues 225-232 are Cytoplasmic-facing; that stretch reads VTHRSFAS.

In terms of assembly, monomer. Homomultimer; when activated. Interacts with TYROBP/DAP12. Interacts with TLR4. As to expression, detected in bone marrow, tongue, lung, liver, thymus, spleen, jejunum, ileum and lymph nodes.

Its subcellular location is the cell membrane. Cell surface receptor that plays important roles in innate and adaptive immunity by amplifying inflammatory responses. Upon activation by various ligands such as PGLYRP1, HMGB1 or HSP70, multimerizes and forms a complex with transmembrane adapter TYROBP/DAP12. In turn, initiates a SYK-mediated cascade of tyrosine phosphorylation, activating multiple downstream mediators such as BTK, MAPK1, MAPK3 or phospholipase C-gamma. This cascade promotes the neutrophil- and macrophage-mediated release of pro-inflammatory cytokines and/or chemokines, as well as their migration and thereby amplifies inflammatory responses that are triggered by bacterial and fungal infections. By also promoting the amplification of inflammatory signals that are initially triggered by Toll-like receptor (TLR) and NOD-like receptor engagement, plays a major role in the pathophysiology of acute and chronic inflammatory diseases of different etiologies including septic shock and atherosclerosis. The polypeptide is Triggering receptor expressed on myeloid cells 1 (TREM1) (Bos taurus (Bovine)).